Consider the following 636-residue polypeptide: Chaperone protein HtpG (636 aa).

Residues 1-344 (MTMSVETQKE…SNDLSLNVSR (344 aa)) are a; substrate-binding. A b region spans residues 345–561 (EILQKDPIID…EQDLGMQMRQ (217 aa)). The c stretch occupies residues 562 to 636 (ILEASGQKVP…LNKLLVELSV (75 aa)).

This sequence belongs to the heat shock protein 90 family. In terms of assembly, homodimer.

It is found in the cytoplasm. Functionally, molecular chaperone. Has ATPase activity. The protein is Chaperone protein HtpG of Pseudomonas fluorescens (strain SBW25).